Here is a 241-residue protein sequence, read N- to C-terminus: Beta-nerve growth factor (241 aa).

The signal sequence occupies residues methionine 1–alanine 18. A propeptide spanning residues glutamate 19 to arginine 121 is cleaved from the precursor. N-linked (GlcNAc...) asparagine glycosylation is found at asparagine 69 and asparagine 114. Cystine bridges form between cysteine 136–cysteine 201, cysteine 179–cysteine 229, and cysteine 189–cysteine 231. A 1-acyl-sn-glycero-3-phospho-(1D-myo-inositol)-binding residues include arginine 171, tyrosine 173, and lysine 209. Residue arginine 171 coordinates a 1-acyl-sn-glycero-3-phospho-L-serine. Lysine 209 provides a ligand contact to a 1-acyl-sn-glycero-3-phospho-L-serine.

This sequence belongs to the NGF-beta family. In terms of assembly, homodimer. The homodimer interacts with a single NTRK1 chain. The homodimer interacts with a single NGFR chain. The NGF dimer interacts with a single SORCS2 chain (via extracellular domain). The NGF precursor (proNGF) binds to a receptor complex formed by SORT1 and NGFR, which leads to NGF endocytosis. Both mature NGF and the immature NGF precursor (proNGF) interact with SORCS2 and with the heterodimer formed by SORCS2 and NGFR (via extracellular domains). The NGF precursor (proNGF) has much higher affinity for SORCS2 than mature NGF. The NGF precursor (proNGF) has much higher affinity for SORT1 than mature NGF. Interacts with ADAM10 in a divalent cation-dependent manner. Interacts with SORCS3. Detected in submaxillary gland (at protein level). Highly expressed in male submaxillary gland. Levels are much lower in female submaxillary gland.

Its subcellular location is the secreted. The protein localises to the endosome lumen. Functionally, nerve growth factor is important for the development and maintenance of the sympathetic and sensory nervous systems. Extracellular ligand for the NTRK1 and NGFR receptors, activates cellular signaling cascades to regulate neuronal proliferation, differentiation and survival. The immature NGF precursor (proNGF) functions as a ligand for the heterodimeric receptor formed by SORCS2 and NGFR, and activates cellular signaling cascades that lead to inactivation of RAC1 and/or RAC2, reorganization of the actin cytoskeleton and neuronal growth cone collapse. In contrast to mature NGF, the precursor form (proNGF) promotes neuronal apoptosis (in vitro). Inhibits metalloproteinase-dependent proteolysis of platelet glycoprotein VI. Binds lysophosphatidylinositol and lysophosphatidylserine between the two chains of the homodimer. The lipid-bound form promotes histamine relase from mast cells, contrary to the lipid-free form. This Mus musculus (Mouse) protein is Beta-nerve growth factor (Ngf).